The primary structure comprises 292 residues: Lipoyl synthase (292 aa).

[4Fe-4S] cluster contacts are provided by cysteine 38, cysteine 43, cysteine 49, cysteine 64, cysteine 68, cysteine 71, and serine 277. Residues 50-266 enclose the Radical SAM core domain; sequence WSKGTATFML…KNRAESLGFR (217 aa).

The protein belongs to the radical SAM superfamily. Lipoyl synthase family. Requires [4Fe-4S] cluster as cofactor.

The protein localises to the cytoplasm. It carries out the reaction [[Fe-S] cluster scaffold protein carrying a second [4Fe-4S](2+) cluster] + N(6)-octanoyl-L-lysyl-[protein] + 2 oxidized [2Fe-2S]-[ferredoxin] + 2 S-adenosyl-L-methionine + 4 H(+) = [[Fe-S] cluster scaffold protein] + N(6)-[(R)-dihydrolipoyl]-L-lysyl-[protein] + 4 Fe(3+) + 2 hydrogen sulfide + 2 5'-deoxyadenosine + 2 L-methionine + 2 reduced [2Fe-2S]-[ferredoxin]. It functions in the pathway protein modification; protein lipoylation via endogenous pathway; protein N(6)-(lipoyl)lysine from octanoyl-[acyl-carrier-protein]: step 2/2. In terms of biological role, catalyzes the radical-mediated insertion of two sulfur atoms into the C-6 and C-8 positions of the octanoyl moiety bound to the lipoyl domains of lipoate-dependent enzymes, thereby converting the octanoylated domains into lipoylated derivatives. The polypeptide is Lipoyl synthase (Chlorobium limicola (strain DSM 245 / NBRC 103803 / 6330)).